The following is a 270-amino-acid chain: Formamidopyrimidine-DNA glycosylase (270 aa).

Residue Pro-2 is the Schiff-base intermediate with DNA of the active site. The active-site Proton donor is Glu-3. The active-site Proton donor; for beta-elimination activity is Lys-58. The DNA site is built by His-91, Arg-110, and Arg-151. An FPG-type zinc finger spans residues 236 to 270; it reads AVYGREGEPCTHCGAPLQGVRIGGRATIYCSQCQR. The active-site Proton donor; for delta-elimination activity is Arg-260.

The protein belongs to the FPG family. Monomer. It depends on Zn(2+) as a cofactor.

The catalysed reaction is Hydrolysis of DNA containing ring-opened 7-methylguanine residues, releasing 2,6-diamino-4-hydroxy-5-(N-methyl)formamidopyrimidine.. It catalyses the reaction 2'-deoxyribonucleotide-(2'-deoxyribose 5'-phosphate)-2'-deoxyribonucleotide-DNA = a 3'-end 2'-deoxyribonucleotide-(2,3-dehydro-2,3-deoxyribose 5'-phosphate)-DNA + a 5'-end 5'-phospho-2'-deoxyribonucleoside-DNA + H(+). Functionally, involved in base excision repair of DNA damaged by oxidation or by mutagenic agents. Acts as a DNA glycosylase that recognizes and removes damaged bases. Has a preference for oxidized purines, such as 7,8-dihydro-8-oxoguanine (8-oxoG). Has AP (apurinic/apyrimidinic) lyase activity and introduces nicks in the DNA strand. Cleaves the DNA backbone by beta-delta elimination to generate a single-strand break at the site of the removed base with both 3'- and 5'-phosphates. This chain is Formamidopyrimidine-DNA glycosylase, found in Acidithiobacillus ferrooxidans (strain ATCC 23270 / DSM 14882 / CIP 104768 / NCIMB 8455) (Ferrobacillus ferrooxidans (strain ATCC 23270)).